The following is a 411-amino-acid chain: Carbohydrate sulfotransferase 1 (411 aa).

Met-1 is a topological domain (cytoplasmic). Residues 2-23 (QCSWKAVLLLALASIAIQYTAI) traverse the membrane as a helical; Signal-anchor for type II membrane protein segment. Residues 24–411 (RTFTAKSFHT…VEERDFRPFL (388 aa)) lie on the Lumenal side of the membrane. Asn-56 carries an N-linked (GlcNAc...) asparagine glycan. Residue 69–75 (TRSGSSF) coordinates 3'-phosphoadenylyl sulfate. N-linked (GlcNAc...) asparagine glycosylation is found at Asn-145 and Asn-189. 3'-phosphoadenylyl sulfate is bound at residue 234-242 (RDPRGILAS). Asn-334 is a glycosylation site (N-linked (GlcNAc...) asparagine). The short motif at 337–339 (RGD) is the Cell attachment site element.

It belongs to the sulfotransferase 1 family. Gal/GlcNAc/GalNAc subfamily.

The protein resides in the golgi apparatus membrane. The catalysed reaction is 3'-phosphoadenylyl sulfate + keratan = adenosine 3',5'-bisphosphate + keratan 6'-sulfate.. It participates in glycan metabolism. Sulfotransferase that utilizes 3'-phospho-5'-adenylyl sulfate (PAPS) as sulfonate donor to catalyze the transfer of sulfate to position 6 of internal galactose (Gal) residues of keratan. Cooperates with B4GALT4 and B3GNT7 glycosyltransferases and CHST6 sulfotransferase to construct and elongate disulfated disaccharide unit [-&gt;3(6-sulfoGalbeta)1-&gt;4(6-sulfoGlcNAcbeta)1-&gt;] within keratan sulfate polymer. Has a preference for sulfating keratan sulfate, but it also transfers sulfate to the unsulfated polymer. Involved in biosynthesis of phosphacan, a major keratan sulfate proteoglycan in the developing brain. Involved in biosynthesis of 6-sulfoGalbeta-containing O-linked glycans in high endothelial venules of lymph nodes. May act in a synergistic manner with CHST4 to generate sialyl 6',6-disulfo Lewis X motif, a recognition determinant for immune cell receptors implicated in leukocyte trafficking. Catalyzes sulfation of N-acetyllactosamine (LacNAc) oligosaccharides with highest efficiency for sialylated LacNAc structures. This chain is Carbohydrate sulfotransferase 1 (Chst1), found in Rattus norvegicus (Rat).